A 267-amino-acid chain; its full sequence is Putative F-box protein At5g38810 (267 aa).

In terms of domain architecture, F-box spans 4–53 (RKTFDSIPDDLFVEIALRLSSKSIARCRCVSKLWASILYRQDFTELFITK).

The protein is Putative F-box protein At5g38810 of Arabidopsis thaliana (Mouse-ear cress).